The sequence spans 382 residues: Chaperone protein DnaJ (382 aa).

The J domain maps to 5–70 (DYYEVLGVSR…DKKAAYDRYG (66 aa)). The CR-type zinc finger occupies 141-219 (GVQKTINVPA…CHGAGRVEKE (79 aa)). Positions 154, 157, 171, 174, 193, 196, 207, and 210 each coordinate Zn(2+). CXXCXGXG motif repeat units follow at residues 154 to 161 (CDSCKGTG), 171 to 178 (CPTCSGMG), 193 to 200 (CPTCNGMG), and 207 to 214 (CKSCHGAG).

This sequence belongs to the DnaJ family. In terms of assembly, homodimer. Requires Zn(2+) as cofactor.

The protein resides in the cytoplasm. Functionally, participates actively in the response to hyperosmotic and heat shock by preventing the aggregation of stress-denatured proteins and by disaggregating proteins, also in an autonomous, DnaK-independent fashion. Unfolded proteins bind initially to DnaJ; upon interaction with the DnaJ-bound protein, DnaK hydrolyzes its bound ATP, resulting in the formation of a stable complex. GrpE releases ADP from DnaK; ATP binding to DnaK triggers the release of the substrate protein, thus completing the reaction cycle. Several rounds of ATP-dependent interactions between DnaJ, DnaK and GrpE are required for fully efficient folding. Also involved, together with DnaK and GrpE, in the DNA replication of plasmids through activation of initiation proteins. This chain is Chaperone protein DnaJ, found in Cereibacter sphaeroides (strain ATCC 17025 / ATH 2.4.3) (Rhodobacter sphaeroides).